A 196-amino-acid polypeptide reads, in one-letter code: Putative 3-methyladenine DNA glycosylase (196 aa).

The protein belongs to the DNA glycosylase MPG family.

This chain is Putative 3-methyladenine DNA glycosylase, found in Chlamydia pneumoniae (Chlamydophila pneumoniae).